The following is a 184-amino-acid chain: Peptide deformylase (184 aa).

Fe cation is bound by residues Cys98 and His140. The active site involves Glu141. A Fe cation-binding site is contributed by His144.

Belongs to the polypeptide deformylase family. Requires Fe(2+) as cofactor.

It carries out the reaction N-terminal N-formyl-L-methionyl-[peptide] + H2O = N-terminal L-methionyl-[peptide] + formate. Removes the formyl group from the N-terminal Met of newly synthesized proteins. Requires at least a dipeptide for an efficient rate of reaction. N-terminal L-methionine is a prerequisite for activity but the enzyme has broad specificity at other positions. This chain is Peptide deformylase, found in Phocaeicola vulgatus (strain ATCC 8482 / DSM 1447 / JCM 5826 / CCUG 4940 / NBRC 14291 / NCTC 11154) (Bacteroides vulgatus).